Reading from the N-terminus, the 303-residue chain is Cysteine synthase B (303 aa).

N6-(pyridoxal phosphate)lysine is present on K41. Pyridoxal 5'-phosphate-binding positions include N71, 174–178 (GTTGT), and S255.

This sequence belongs to the cysteine synthase/cystathionine beta-synthase family. In terms of assembly, homodimer. Pyridoxal 5'-phosphate serves as cofactor.

It carries out the reaction O-acetyl-L-serine + hydrogen sulfide = L-cysteine + acetate. It participates in amino-acid biosynthesis; L-cysteine biosynthesis; L-cysteine from L-serine: step 2/2. Two cysteine synthase enzymes are found. Both catalyze the same reaction. Cysteine synthase B can also use thiosulfate in place of sulfide to give cysteine thiosulfonate as a product. This is Cysteine synthase B (cysM) from Escherichia coli (strain K12).